A 182-amino-acid chain; its full sequence is UPF0397 protein BCQ_2505 (182 aa).

Transmembrane regions (helical) follow at residues 9 to 29 (VVAI…GFSI), 40 to 60 (AILT…IGLI), 71 to 91 (WGIW…MGFI), 114 to 134 (ITGL…DIIV), and 142 to 162 (IVIQ…VLGL).

The protein belongs to the UPF0397 family.

The protein localises to the cell membrane. The sequence is that of UPF0397 protein BCQ_2505 from Bacillus cereus (strain Q1).